A 146-amino-acid polypeptide reads, in one-letter code: Hemoglobin subunit beta (146 aa).

One can recognise a Globin domain in the interval 2–146; the sequence is HWSAEEKQLI…VAHALARKYH (145 aa). His-63 and His-92 together coordinate heme b.

Belongs to the globin family. In terms of assembly, heterotetramer of two alpha chains and two beta chains. In terms of tissue distribution, red blood cells.

Its function is as follows. Involved in oxygen transport from the lung to the various peripheral tissues. The chain is Hemoglobin subunit beta (HBB) from Columba livia (Rock dove).